A 385-amino-acid polypeptide reads, in one-letter code: Arginine biosynthesis bifunctional protein ArgJ (385 aa).

Substrate-binding residues include T142, K168, T179, E259, N380, and T385. Residue T179 is the Nucleophile of the active site.

This sequence belongs to the ArgJ family. Heterotetramer of two alpha and two beta chains.

Its subcellular location is the cytoplasm. The enzyme catalyses N(2)-acetyl-L-ornithine + L-glutamate = N-acetyl-L-glutamate + L-ornithine. It catalyses the reaction L-glutamate + acetyl-CoA = N-acetyl-L-glutamate + CoA + H(+). The protein operates within amino-acid biosynthesis; L-arginine biosynthesis; L-ornithine and N-acetyl-L-glutamate from L-glutamate and N(2)-acetyl-L-ornithine (cyclic): step 1/1. It functions in the pathway amino-acid biosynthesis; L-arginine biosynthesis; N(2)-acetyl-L-ornithine from L-glutamate: step 1/4. Catalyzes two activities which are involved in the cyclic version of arginine biosynthesis: the synthesis of N-acetylglutamate from glutamate and acetyl-CoA as the acetyl donor, and of ornithine by transacetylation between N(2)-acetylornithine and glutamate. The chain is Arginine biosynthesis bifunctional protein ArgJ from Leptospira interrogans serogroup Icterohaemorrhagiae serovar Lai (strain 56601).